Consider the following 185-residue polypeptide: Elongation factor P (185 aa).

It belongs to the elongation factor P family.

Its subcellular location is the cytoplasm. It participates in protein biosynthesis; polypeptide chain elongation. Its function is as follows. Involved in peptide bond synthesis. Stimulates efficient translation and peptide-bond synthesis on native or reconstituted 70S ribosomes in vitro. Probably functions indirectly by altering the affinity of the ribosome for aminoacyl-tRNA, thus increasing their reactivity as acceptors for peptidyl transferase. The sequence is that of Elongation factor P from Alkaliphilus oremlandii (strain OhILAs) (Clostridium oremlandii (strain OhILAs)).